Here is a 341-residue protein sequence, read N- to C-terminus: Putative [LysW]-lysine/[LysW]-ornithine hydrolase (341 aa).

Position 62 (H62) interacts with Zn(2+). D64 is a catalytic residue. D86 contributes to the Zn(2+) binding site. The active-site Proton acceptor is the E115. 3 residues coordinate Zn(2+): E116, E140, and H309.

Belongs to the peptidase M20A family. LysK subfamily. Zn(2+) serves as cofactor. The cofactor is Co(2+).

It is found in the cytoplasm. The catalysed reaction is [amino-group carrier protein]-C-terminal-gamma-(L-lysyl)-L-glutamate + H2O = [amino-group carrier protein]-C-terminal-L-glutamate + L-lysine. It carries out the reaction [amino-group carrier protein]-C-terminal-gamma-(L-ornithyl)-L-glutamate + H2O = [amino-group carrier protein]-C-terminal-L-glutamate + L-ornithine. The protein operates within amino-acid biosynthesis; L-lysine biosynthesis via AAA pathway; L-lysine from L-alpha-aminoadipate (Thermus route): step 5/5. Its pathway is amino-acid biosynthesis; L-arginine biosynthesis. In terms of biological role, catalyzes the release of L-lysine from [LysW]-gamma-L-lysine and the release of L-ornithine from [LysW]-L-ornithine. This chain is Putative [LysW]-lysine/[LysW]-ornithine hydrolase, found in Pyrobaculum aerophilum (strain ATCC 51768 / DSM 7523 / JCM 9630 / CIP 104966 / NBRC 100827 / IM2).